A 199-amino-acid polypeptide reads, in one-letter code: Recombination protein RecR (199 aa).

The C4-type zinc finger occupies 57–72 (CSSCRTFTEESLCPIC). The 96-residue stretch at 81–176 (DLICVVETPA…NVSRIAHGVP (96 aa)) folds into the Toprim domain.

This sequence belongs to the RecR family.

May play a role in DNA repair. It seems to be involved in an RecBC-independent recombinational process of DNA repair. It may act with RecF and RecO. This chain is Recombination protein RecR, found in Shewanella loihica (strain ATCC BAA-1088 / PV-4).